We begin with the raw amino-acid sequence, 1099 residues long: Mediator of RNA polymerase II transcription subunit 5 (1099 aa).

The segment at 41 to 66 (DNDDAKTQEGSGSQDKTDVEESISKP) is disordered.

Belongs to the Mediator complex subunit 5 family. Component of the Mediator complex.

The protein resides in the nucleus. Functionally, component of the Mediator complex, a coactivator involved in the regulated transcription of nearly all RNA polymerase II-dependent genes. Mediator functions as a bridge to convey information from gene-specific regulatory proteins to the basal RNA polymerase II transcription machinery. Mediator is recruited to promoters by direct interactions with regulatory proteins and serves as a scaffold for the assembly of a functional preinitiation complex with RNA polymerase II and the general transcription factors. The polypeptide is Mediator of RNA polymerase II transcription subunit 5 (NUT1) (Candida glabrata (strain ATCC 2001 / BCRC 20586 / JCM 3761 / NBRC 0622 / NRRL Y-65 / CBS 138) (Yeast)).